The primary structure comprises 787 residues: Elongation factor G-1, chloroplastic (787 aa).

The transit peptide at 1–86 directs the protein to the chloroplast; that stretch reads MAAESSLRVA…PRRNFSVFAM (86 aa). Residues 14-24 show a composition bias toward polar residues; that stretch reads LCNLNGSQRRP. The segment at 14–34 is disordered; it reads LCNLNGSQRRPTTTTLSPLRF. The tr-type G domain maps to 98-373; that stretch reads KDYRNIGIMA…AVVDYLPSPL (276 aa). Residues 107–114, 171–175, and 225–228 each bind GTP; these read AHIDAGKT, DTPGH, and NKMD.

It belongs to the TRAFAC class translation factor GTPase superfamily. Classic translation factor GTPase family. EF-G/EF-2 subfamily.

It is found in the plastid. Its subcellular location is the chloroplast. It participates in protein biosynthesis; polypeptide chain elongation. Its function is as follows. Chloroplast-localized elongation factor EF-G involved in protein synthesis in plastids. Catalyzes the GTP-dependent ribosomal translocation step during translation elongation. During this step, the ribosome changes from the pre-translocational (PRE) to the post-translocational (POST) state as the newly formed A-site-bound peptidyl-tRNA and P-site-bound deacylated tRNA move to the P and E sites, respectively. Catalyzes the coordinated movement of the two tRNA molecules, the mRNA and conformational changes in the ribosome. This is Elongation factor G-1, chloroplastic (fusA1) from Glycine max (Soybean).